A 101-amino-acid polypeptide reads, in one-letter code: Protein PrgJ (101 aa).

The protein to S.flexneri MxiI.

In terms of biological role, required for invasion of epithelial cells. This is Protein PrgJ (prgJ) from Salmonella typhimurium (strain LT2 / SGSC1412 / ATCC 700720).